The primary structure comprises 1435 residues: MDVLELLRVSGSNMYYSTFLADAWCYYISNQITMTMYLYCALGVLSMLFIGWFVYFKRLARLRLRHEIARSLSAVTMASGGDLRGPRFRKRDKMLFYGRRMLRKMKNVSGQMYSSGKGYKRRAVIRFARRILQLRRENMPLEVRTVEPPAEYLEETMEGSDRVPPDALYMLQSIRIFGHFEKPIFLRLCKHTQLLELMGGDYLFKITDPDDSVYIVQSGMINVYISNADGSTLSLKTVRKGESVTSLLSFIDVLSGNPSYYKTVTAKAIEKSVVIRLPMAAFQEVFKDSPDVMIRVIQVIMIRLQRVLFTALRNYLGLNAELVQNHMRFKGSSQGAGPSVYCSQTTRQATGSASATATAAAASGTAGSTHTAVPRPASSLSRYSQDEQHTLSDPNPGIPNLELSGDSVNTLFGEVNGGARLNSYPPLYHQRESDGNLSTRRGSITQQEQPEVGPVPSIDMRLVKSSAVDSLRKELGLPEQDAHIIDPFVEVREMEPNVTLITEGNADDVCVWFVMTGTLAVYQGNADATRIKQDKTDLLIHYVHPGEIVGGLAMLTGEASAYTIRSRNHSRVAFIRRAAIYQIMRQRPRIVLDLGNGVVRRLSPLVRQCDYALDWIFLESGRALYRQDESSDSTYIVLSGRMRSVITHPGGKKEIVGEYGKGDLVGIVEMITETSRTTTVMAVRDSELAKLPEGLFNAIKLRYPIVVTKLISFLSHRFLGSMQTRTTTGAPGAPVEANPVTHKYSTVALVPITDDVPLTPFTYELYHSLCAIGPVLRLTSDLARKQLGMNIFDASNEYRLTSWLAQQEDRNIITLYQCDNALSPWTQRCMRQADVVLIVGLGDHSHLVGKFEREIDRLALRTQKELVLLYPETASSKPANTLSWLNARPWVTKHHHVLCVKRIFTRKSQYRINDLYSRVLLSEPNMHSDFSRLARWLTGNSIGLVLGGGGARGAAHIGMLKAIQEAGIPIDMVGGVSIGALMGALWCSERNITTVTQKAREWSKKMTKWFLQLLDLTYPITSMFSGREFNKTIHETFGDVNIEDLWIPYFTLTTDITASCHRIHTNGSLWRYVRSSMSLSGYMPPLCDPKDGHLLLDGGYVNNLPGHLWRYCRASMSIAGVFPPFCDYRDGHLLLDGCYTNNVPADVMHNLGAAHIIAIDVGSQDDTDLTNYGDDLSGWWLLYKKWNPFTAPVKVPDLPDIQSRLAYVSCVRQLEEVKNSDYCEYIRPLINKYQTLSCAGCPETYGLNPSDLFSEDEDCDGYISEPTTLNTDVRRYQVPRGGNSLSLSETEMDMDSDVEMDLKMERKMDKATQSTPPLQSKAQILRRKHSKEEARHEWEIKREQKQELAREQELERERELSQKGTTAGATGYTPNAVIATQTSLIFMDEEDEMDKKKTKDNDRDEVRGSAEDTGKEKEEDKENRSNTNNETKNYL.

Residues 1-35 (MDVLELLRVSGSNMYYSTFLADAWCYYISNQITMT) lie on the Lumenal side of the membrane. The helical transmembrane segment at 36-56 (MYLYCALGVLSMLFIGWFVYF) threads the bilayer. The Cytoplasmic segment spans residues 57–1435 (KRLARLRLRH…NTNNETKNYL (1379 aa)). An a nucleoside 3',5'-cyclic phosphate-binding site is contributed by 176–303 (IFGHFEKPIF…IRVIQVIMIR (128 aa)). The segment covering 361–372 (AASGTAGSTHTA) has biased composition (low complexity). Disordered stretches follow at residues 361–405 (AASG…ELSG) and 422–452 (NSYP…QPEV). Residues 435–449 (GNLSTRRGSITQQEQ) are compositionally biased toward polar residues. S443 carries the phosphoserine modification. Residues 474-601 (ELGL…VVRR) and 590-717 (IVLD…LSHR) each bind a nucleoside 3',5'-cyclic phosphate. The PNPLA domain maps to 944 to 1110 (LVLGGGGARG…VNNLPGHLWR (167 aa)). Positions 948–953 (GGGARG) match the GXGXXG motif. Residues 975-979 (GVSIG) carry the GXSXG motif. Residue S977 is the Nucleophile of the active site. Residue D1097 is the Proton acceptor of the active site. A DGA/G motif is present at residues 1097 to 1099 (DGG). A disordered region spans residues 1308 to 1435 (MDKATQSTPP…NTNNETKNYL (128 aa)). A compositionally biased stretch (polar residues) spans 1311-1322 (ATQSTPPLQSKA). 2 stretches are compositionally biased toward basic and acidic residues: residues 1330–1361 (SKEE…RELS) and 1393–1424 (MDKK…KENR). The segment covering 1425 to 1435 (SNTNNETKNYL) has biased composition (polar residues).

It belongs to the NTE family. Interacts with Pka-C3; interaction inhibits the catalytic function of Pka-C3 and the esterase activity of sws.

It is found in the endoplasmic reticulum membrane. It catalyses the reaction a 1-acyl-sn-glycero-3-phosphocholine + H2O = sn-glycerol 3-phosphocholine + a fatty acid + H(+). Functionally, phospholipase B that deacylates intracellular phosphatidylcholine (PtdCho), generating glycerophosphocholine (GroPtdCho). This deacylation occurs at both sn-2 and sn-1 positions of PtdCho. Its specific chemical modification by certain organophosphorus (OP) compounds leads to distal axonopathy. Plays a role in the signaling mechanism between neurons and glia that regulates glia wrapping during development of the adult brain. Essential for membrane lipid homeostasis and cell survival in both neurons and glia of the adult brain. The polypeptide is Neuropathy target esterase sws (Drosophila persimilis (Fruit fly)).